The primary structure comprises 222 residues: Probable nicotinate-nucleotide adenylyltransferase (222 aa).

The protein belongs to the NadD family.

The catalysed reaction is nicotinate beta-D-ribonucleotide + ATP + H(+) = deamido-NAD(+) + diphosphate. It functions in the pathway cofactor biosynthesis; NAD(+) biosynthesis; deamido-NAD(+) from nicotinate D-ribonucleotide: step 1/1. Catalyzes the reversible adenylation of nicotinate mononucleotide (NaMN) to nicotinic acid adenine dinucleotide (NaAD). The sequence is that of Probable nicotinate-nucleotide adenylyltransferase from Xylella fastidiosa (strain M23).